A 176-amino-acid polypeptide reads, in one-letter code: MDQNNLSKSSEEIVEQRGIVSNRLYKDGITNNSLGNDHIGVELLSVKPEKLYEAISSLKKYGFNYLQCQGGYDEGPGKRLVSFYHLISLQDIEELEEIKEIRVKVFLNRDSDLSVPSLYKIFKGSDWQERETYDMYGINFQDHPNPKRILMPEDWRGWPLRKDYIQPDFYELQDAY.

Belongs to the complex I 30 kDa subunit family. As to quaternary structure, NDH-1 can be composed of about 15 different subunits; different subcomplexes with different compositions have been identified which probably have different functions.

The protein resides in the cellular thylakoid membrane. The catalysed reaction is a plastoquinone + NADH + (n+1) H(+)(in) = a plastoquinol + NAD(+) + n H(+)(out). It catalyses the reaction a plastoquinone + NADPH + (n+1) H(+)(in) = a plastoquinol + NADP(+) + n H(+)(out). NDH-1 shuttles electrons from an unknown electron donor, via FMN and iron-sulfur (Fe-S) centers, to quinones in the respiratory and/or the photosynthetic chain. The immediate electron acceptor for the enzyme in this species is believed to be plastoquinone. Couples the redox reaction to proton translocation, and thus conserves the redox energy in a proton gradient. Cyanobacterial NDH-1 also plays a role in inorganic carbon-concentration. The sequence is that of NAD(P)H-quinone oxidoreductase subunit J from Prochlorococcus marinus (strain MIT 9515).